Reading from the N-terminus, the 366-residue chain is tRNA-queuosine alpha-mannosyltransferase (366 aa).

The protein belongs to the glycosyltransferase group 1 family. Glycosyltransferase 4 subfamily.

The protein resides in the cytoplasm. The protein localises to the nucleus. The catalysed reaction is queuosine(34) in tRNA(Asp) + GDP-alpha-D-mannose = O-4''-alpha-D-mannosylqueuosine(34) in tRNA(Asp) + GDP + H(+). Glycosyltransferase that specifically catalyzes mannosylation of cytoplasmic tRNA(Asp) modified with queuosine at position 34 (queuosine(34)). Mannosylates the cyclopentene moiety of queuosine(34) in tRNA(Asp) to form mannosyl-queuosine(34). Mannosylation of queuosine(34) in tRNA(Asp) is required to slow-down elongation at cognate codons, GAC and GAU, thereby regulating protein translation. This chain is tRNA-queuosine alpha-mannosyltransferase (GTDC1), found in Bos taurus (Bovine).